The sequence spans 254 residues: Type III pantothenate kinase (254 aa).

ATP is bound at residue 6–13 (DVGNSNIV). Residues Tyr-100 and 107–110 (GADR) each bind substrate. Asp-109 serves as the catalytic Proton acceptor. Asp-129 lines the K(+) pocket. ATP is bound at residue Thr-132. Thr-184 contributes to the substrate binding site.

It belongs to the type III pantothenate kinase family. As to quaternary structure, homodimer. It depends on NH4(+) as a cofactor. Requires K(+) as cofactor.

Its subcellular location is the cytoplasm. The catalysed reaction is (R)-pantothenate + ATP = (R)-4'-phosphopantothenate + ADP + H(+). It functions in the pathway cofactor biosynthesis; coenzyme A biosynthesis; CoA from (R)-pantothenate: step 1/5. Catalyzes the phosphorylation of pantothenate (Pan), the first step in CoA biosynthesis. The chain is Type III pantothenate kinase from Pelobacter propionicus (strain DSM 2379 / NBRC 103807 / OttBd1).